A 198-amino-acid chain; its full sequence is Beta-crystallin A1-2 (198 aa).

Positions 1 to 13 (MAQINPLPVPLGP) are N-terminal arm. Beta/gamma crystallin 'Greek key' domains are found at residues 14 to 53 (WKIT…KVEC) and 54 to 100 (GAWI…RPIC). Residues 101 to 106 (SANHIE) are connecting peptide. 2 consecutive Beta/gamma crystallin 'Greek key' domains span residues 107 to 148 (SKLV…KVQC) and 149 to 197 (GAWV…RRIQ).

This sequence belongs to the beta/gamma-crystallin family. In terms of assembly, homo/heterodimer, or complexes of higher-order. The structure of beta-crystallin oligomers seems to be stabilized through interactions between the N-terminal arms. The N-terminus is blocked.

Functionally, crystallins are the dominant structural components of the vertebrate eye lens. The chain is Beta-crystallin A1-2 from Aquarana catesbeiana (American bullfrog).